Consider the following 530-residue polypeptide: MNNARPIRRALISVSDKTGIVEFAQALANRGVDILSTGGTARLLAEKGISVTEVSDYTGFPEMMDGRVKTLHPKVHGGVLGRRGQDDDVMETHGINPIDMVVVNLYPFAETVAKEGCTLADAVENIDIGGPTMVRSAAKNHKDVTIVVNAHDYERVVAEMDANEKSLTLETRFDLAIAAFEHTASYDGMIANYFGTMVPSYGENKEGDEESKFPRTFNQQFEKKQDMRYGENSHQAAAFYVEANPEEASVSTARQIQGKALSYNNIADTDAALECVKEFDEPACVIVKHANPCGVALGEDILEAYDRAFKTDPTSAFGGIIAFNRELDAATATAITERQFVEVIIAPSVSAEAVAIVAAKKNLRLLECGEWTTKTTGFDVKRVNGGLLVQDRDQGMVSEDDLKVVSKRQPTAEELKDALFCWKVAKYVKSNAIVYSKGDMTIGVGAGQMSRVYSAKIAGIKAADEGLQVEGCVMASDAFFPFRDGIDAAAEAGIKCVIQPGGSMRDDEVIAAADEHGMAMIFTGMRHFRH.

Positions 1 to 148 constitute an MGS-like domain; it reads MNNARPIRRA…KNHKDVTIVV (148 aa).

Belongs to the PurH family.

It catalyses the reaction (6R)-10-formyltetrahydrofolate + 5-amino-1-(5-phospho-beta-D-ribosyl)imidazole-4-carboxamide = 5-formamido-1-(5-phospho-D-ribosyl)imidazole-4-carboxamide + (6S)-5,6,7,8-tetrahydrofolate. The enzyme catalyses IMP + H2O = 5-formamido-1-(5-phospho-D-ribosyl)imidazole-4-carboxamide. Its pathway is purine metabolism; IMP biosynthesis via de novo pathway; 5-formamido-1-(5-phospho-D-ribosyl)imidazole-4-carboxamide from 5-amino-1-(5-phospho-D-ribosyl)imidazole-4-carboxamide (10-formyl THF route): step 1/1. The protein operates within purine metabolism; IMP biosynthesis via de novo pathway; IMP from 5-formamido-1-(5-phospho-D-ribosyl)imidazole-4-carboxamide: step 1/1. In Vibrio atlanticus (strain LGP32) (Vibrio splendidus (strain Mel32)), this protein is Bifunctional purine biosynthesis protein PurH.